Consider the following 189-residue polypeptide: Small heat shock protein 21 (189 aa).

A disordered region spans residues 26–53; the sequence is PPNFNPRKIAQGDNGKGQQVSRYGAGAG. Residues 77 to 183 form the sHSP domain; it reads KYFVGFDDNV…HEKIVNIPIS (107 aa).

It belongs to the small heat shock protein (HSP20) family.

Functionally, heat shock protein required for pathogenicity. Mediates thermotolerance and adaptation to oxidative stress and ethanol-induced stress. Required for invasive growth and filament formation under various filament inducing conditions. Plays a role in the capacity of damaging human-derived endothelial and oral epithelial cells during infection. Potentiates resistance to antifungal drugs, as well as resistance to killing by human neutrophils. Plays a major role in trehalose homeostasis in response to elevated temperatures. Regulates CEK1 activation by phosphorylation in response to elevated temperatures. This Candida albicans (strain SC5314 / ATCC MYA-2876) (Yeast) protein is Small heat shock protein 21 (HSP21).